Here is a 237-residue protein sequence, read N- to C-terminus: Ubiquinone biosynthesis O-methyltransferase (237 aa).

S-adenosyl-L-methionine is bound by residues Arg38, Gly58, Asp79, and Met124.

The protein belongs to the methyltransferase superfamily. UbiG/COQ3 family.

It catalyses the reaction a 3-demethylubiquinol + S-adenosyl-L-methionine = a ubiquinol + S-adenosyl-L-homocysteine + H(+). It carries out the reaction a 3-(all-trans-polyprenyl)benzene-1,2-diol + S-adenosyl-L-methionine = a 2-methoxy-6-(all-trans-polyprenyl)phenol + S-adenosyl-L-homocysteine + H(+). It functions in the pathway cofactor biosynthesis; ubiquinone biosynthesis. O-methyltransferase that catalyzes the 2 O-methylation steps in the ubiquinone biosynthetic pathway. The chain is Ubiquinone biosynthesis O-methyltransferase from Acinetobacter baumannii (strain ACICU).